We begin with the raw amino-acid sequence, 615 residues long: DNA mismatch repair protein MutL (615 aa).

The tract at residues 362-397 is disordered; the sequence is HFAEPAVREPVAPRYSPAPASGSRPAAPWPNAQPGY. The span at 373-387 shows a compositional bias: low complexity; sequence APRYSPAPASGSRPA.

This sequence belongs to the DNA mismatch repair MutL/HexB family.

This protein is involved in the repair of mismatches in DNA. It is required for dam-dependent methyl-directed DNA mismatch repair. May act as a 'molecular matchmaker', a protein that promotes the formation of a stable complex between two or more DNA-binding proteins in an ATP-dependent manner without itself being part of a final effector complex. The protein is DNA mismatch repair protein MutL of Escherichia coli O81 (strain ED1a).